We begin with the raw amino-acid sequence, 188 residues long: RWD domain-containing protein 4 (188 aa).

Residues 9-111 form the RWD domain; that stretch reads MELEALRSIY…EYAKDNKEQF (103 aa). Positions 132-167 are disordered; that stretch reads TPSAAPSSKKKDKKEQLSKAQKRKLADKTDHKGELP. Over residues 155 to 166 the composition is skewed to basic and acidic residues; that stretch reads KLADKTDHKGEL.

The protein is RWD domain-containing protein 4 (Rwdd4) of Rattus norvegicus (Rat).